The following is a 237-amino-acid chain: Phosphoribosylaminoimidazole-succinocarboxamide synthase (237 aa).

The protein belongs to the SAICAR synthetase family.

It catalyses the reaction 5-amino-1-(5-phospho-D-ribosyl)imidazole-4-carboxylate + L-aspartate + ATP = (2S)-2-[5-amino-1-(5-phospho-beta-D-ribosyl)imidazole-4-carboxamido]succinate + ADP + phosphate + 2 H(+). It participates in purine metabolism; IMP biosynthesis via de novo pathway; 5-amino-1-(5-phospho-D-ribosyl)imidazole-4-carboxamide from 5-amino-1-(5-phospho-D-ribosyl)imidazole-4-carboxylate: step 1/2. This is Phosphoribosylaminoimidazole-succinocarboxamide synthase from Yersinia pseudotuberculosis serotype O:1b (strain IP 31758).